A 25-amino-acid polypeptide reads, in one-letter code: Retinol-binding protein 3 (25 aa).

It localises to the secreted. Its subcellular location is the extracellular space. It is found in the extracellular matrix. The protein resides in the interphotoreceptor matrix. Its function is as follows. IRBP shuttles 11-cis and all trans retinoids between the retinol isomerase in the pigment epithelium and the visual pigments in the photoreceptor cells of the retina. The chain is Retinol-binding protein 3 (RBP3) from Sus scrofa (Pig).